Consider the following 219-residue polypeptide: Ras-related protein Rab-32A (219 aa).

A GTP-binding site is contributed by 22-29 (GDIGTGKT). The short motif at 44-52 (YKSTIGVDF) is the Effector region element. GTP is bound by residues 71-75 (DIAGQ) and 134-137 (NKCD). The interval 192–219 (NQPIEGTIQPGDLNKQPQPTSTGPSCCK) is disordered. Residues 206–219 (KQPQPTSTGPSCCK) show a composition bias toward polar residues. S-geranylgeranyl cysteine attachment occurs at residues Cys-217 and Cys-218.

This sequence belongs to the small GTPase superfamily. Rab family.

This chain is Ras-related protein Rab-32A (rab32A), found in Dictyostelium discoideum (Social amoeba).